A 324-amino-acid chain; its full sequence is uncharacterized protein (324 aa).

8 consecutive transmembrane segments (helical) span residues 5–24 (VIGI…NRAM), 39–61 (FIFM…PLLL), 68–90 (FYWI…FAAA), 95–117 (WLIA…LFYV), 130–152 (QKIP…LIQL), 162–179 (MLLF…AYPL), 199–218 (LGMT…YGWW), and 228–250 (TVQS…FWAT).

Its subcellular location is the cell membrane. This is an uncharacterized protein from Bacillus subtilis (strain 168).